An 80-amino-acid chain; its full sequence is MMKPLRQQNRQIISYIPRVEPAPPEHAIKMDAFRDVWILRGKYVAFVLMGESFQRSPAFSVPESAQRWANQVRQENEIAD.

Belongs to the CedA family.

In terms of biological role, activates the cell division inhibited by chromosomal DNA over-replication. This is Cell division activator CedA from Salmonella arizonae (strain ATCC BAA-731 / CDC346-86 / RSK2980).